We begin with the raw amino-acid sequence, 459 residues long: Cysteine--tRNA ligase (459 aa).

Cys28 provides a ligand contact to Zn(2+). Residues Val30 to His40 carry the 'HIGH' region motif. Residues Cys209, His234, and Glu238 each contribute to the Zn(2+) site. Residues Lys266–Ser270 carry the 'KMSKS' region motif. Residue Lys269 coordinates ATP.

The protein belongs to the class-I aminoacyl-tRNA synthetase family. Monomer. It depends on Zn(2+) as a cofactor.

It is found in the cytoplasm. It catalyses the reaction tRNA(Cys) + L-cysteine + ATP = L-cysteinyl-tRNA(Cys) + AMP + diphosphate. The polypeptide is Cysteine--tRNA ligase (Shewanella amazonensis (strain ATCC BAA-1098 / SB2B)).